The following is a 317-amino-acid chain: Ribonuclease H2 subunit A (317 aa).

Residues 43–270 form the RNase H type-2 domain; the sequence is PCCLGVDEAG…AKDMLETKGG (228 aa). 3 residues coordinate a divalent metal cation: D49, E50, and D166.

The protein belongs to the RNase HII family. Eukaryotic subfamily. Requires Mn(2+) as cofactor. Mg(2+) serves as cofactor.

It carries out the reaction Endonucleolytic cleavage to 5'-phosphomonoester.. Its function is as follows. Endonuclease that specifically degrades the RNA of RNA-DNA hybrids. Participates in DNA replication. This is Ribonuclease H2 subunit A (rnh-201) from Neurospora crassa (strain ATCC 24698 / 74-OR23-1A / CBS 708.71 / DSM 1257 / FGSC 987).